We begin with the raw amino-acid sequence, 183 residues long: Ras-related protein Rap-2a (183 aa).

GTP is bound at residue 10–17 (GSGGVGKS). An Effector region motif is present at residues 32 to 40 (YDPTIEDFY). Threonine 35 carries a (Microbial infection) O-linked (Glc) threonine; by C.difficile toxin TcdA, and by P.sordellii toxin TcsL glycan. GTP is bound by residues 57 to 61 (DTAGT) and 116 to 119 (NKVD). Residues cysteine 176 and cysteine 177 are each lipidated (S-palmitoyl cysteine). The residue at position 180 (cysteine 180) is a Cysteine methyl ester. A lipid anchor (S-farnesyl cysteine) is attached at cysteine 180. Residues 181 to 183 (NIQ) constitute a propeptide, removed in mature form.

It belongs to the small GTPase superfamily. Ras family. In terms of assembly, interacts (GTP-bound form) with RUNDC3A. Interacts with RGS14; the interaction is GTP-dependent. Interacts with PLCE1. Interacts with ARHGAP29, SGSM1, SGSM2 and SGSM3. Interacts (GTP-bound form preferentially) with TNIK (via the CNH domain); the interaction is direct and recruits RAP2A to the E3 ubiquitin ligase NEDD4. Interacts with MINK1. Interacts (GTP-bound form preferentially) with MAP4K4. Interacts with cytoskeletal actin. Post-translationally, ubiquitinated; undergoes 'Lys-63' monoubiquitination and diubiquitination by NEDD4. Multiple lysine residues are probably modified. Ubiquitination requires TNIK, prevents interaction with effectors and inactivates RAP2A. Ubiquitination by the ECS(RAB40B) complex leads to RAP2A localization to lamellipodia plasma membrane, activation, and regulation of sorting at early endosomes for recycling to the lamellipodia plasma membrane. In terms of processing, palmitoylated. Palmitoylation is required for association with recycling endosome membranes and activation of TNIK. (Microbial infection) Glucosylated at Thr-35 by C.difficile toxin TcdA in the colonic epithelium, and by P.sordellii toxin TcsL in the vascular endothelium.

It is found in the midbody. It localises to the cell projection. Its subcellular location is the lamellipodium membrane. The protein resides in the golgi apparatus. The protein localises to the recycling endosome membrane. It is found in the lysosome. The enzyme catalyses GTP + H2O = GDP + phosphate + H(+). Its activity is regulated as follows. Activated by the guanine nucleotide-exchange factors RAPGEF3 and RAPGEF4 in a cAMP-dependent manner. Nucleotide exchange is also specifically stimulated by RAPGEF5, RASGEF1A and RASGEF1B. Small GTP-binding protein which cycles between a GDP-bound inactive and a GTP-bound active form. In its active form interacts with and regulates several effectors including MAP4K4, MINK1 and TNIK. Part of a signaling complex composed of NEDD4, RAP2A and TNIK which regulates neuronal dendrite extension and arborization during development. More generally, it is part of several signaling cascades and regulates cytoskeletal rearrangements, cell migration, cell adhesion and cell spreading. In Homo sapiens (Human), this protein is Ras-related protein Rap-2a.